A 65-amino-acid polypeptide reads, in one-letter code: Large ribosomal subunit protein bL35 (65 aa).

Basic residues-rich tracts occupy residues 1 to 15 (MPKMKTKKSASKRFT) and 26 to 44 (QAFKRHILTKKTTKNKRQL). The disordered stretch occupies residues 1-65 (MPKMKTKKSA…KSVRAMMPYA (65 aa)).

This sequence belongs to the bacterial ribosomal protein bL35 family.

The sequence is that of Large ribosomal subunit protein bL35 from Cupriavidus metallidurans (strain ATCC 43123 / DSM 2839 / NBRC 102507 / CH34) (Ralstonia metallidurans).